An 882-amino-acid polypeptide reads, in one-letter code: DNA mismatch repair protein MutS (882 aa).

Glycine 629–serine 636 contacts ATP.

Belongs to the DNA mismatch repair MutS family.

This protein is involved in the repair of mismatches in DNA. It is possible that it carries out the mismatch recognition step. This protein has a weak ATPase activity. The sequence is that of DNA mismatch repair protein MutS from Ralstonia pickettii (strain 12J).